Reading from the N-terminus, the 3672-residue chain is Laminin-like protein epi-1 (3672 aa).

The N-terminal stretch at 1 to 27 is a signal peptide; the sequence is MSPYDSSPWATKALFLIVTLLAQFTYS. In terms of domain architecture, Laminin N-terminal spans 28–297; sequence QVLTPSQITI…AIKEIMIGGR (270 aa). N-linked (GlcNAc...) asparagine glycosylation is found at Asn-121, Asn-140, and Asn-249. Intrachain disulfides connect Cys-298/Cys-307, Cys-300/Cys-320, Cys-322/Cys-331, Cys-334/Cys-354, Cys-357/Cys-366, Cys-359/Cys-391, Cys-394/Cys-403, Cys-406/Cys-424, Cys-427/Cys-438, Cys-429/Cys-445, Cys-447/Cys-456, Cys-459/Cys-469, Cys-472/Cys-484, Cys-474/Cys-491, Cys-493/Cys-502, Cys-505/Cys-516, Cys-519/Cys-531, Cys-521/Cys-538, Cys-540/Cys-549, Cys-552/Cys-561, Cys-564/Cys-576, Cys-566/Cys-583, Cys-585/Cys-594, Cys-597/Cys-607, Cys-610/Cys-622, Cys-612/Cys-629, Cys-631/Cys-640, Cys-643/Cys-653, Cys-656/Cys-668, Cys-658/Cys-674, Cys-676/Cys-685, Cys-688/Cys-698, Cys-701/Cys-715, Cys-703/Cys-724, Cys-726/Cys-735, Cys-738/Cys-753, Cys-756/Cys-770, Cys-758/Cys-777, Cys-779/Cys-788, Cys-791/Cys-806, Cys-809/Cys-821, Cys-811/Cys-828, and Cys-830/Cys-839. 10 consecutive Laminin EGF-like domains span residues 298-356, 357-426, 427-471, 472-518, 519-563, 564-609, 610-655, 656-700, 701-755, and 756-808; these read CVCN…TCEA, CNCF…PCKV, CDCD…KCKP, CECN…GCVE, CVCD…DCKF, CNCD…NCKA, CACD…DCRG, CECL…ICEE, CNCN…GCRS, and CDCN…GCES. An N-linked (GlcNAc...) asparagine glycan is attached at Asn-351. An N-linked (GlcNAc...) asparagine glycan is attached at Asn-477. Residues Asn-511 and Asn-530 are each glycosylated (N-linked (GlcNAc...) asparagine). The N-linked (GlcNAc...) asparagine glycan is linked to Asn-634. An N-linked (GlcNAc...) asparagine glycan is attached at Asn-761. Residues 809–839 enclose the Laminin EGF-like 11; truncated domain; that stretch reads CHCDIGGALRAECDITSGQCKCRPRVTGLRC. N-linked (GlcNAc...) asparagine glycans are attached at residues Asn-1014 and Asn-1341. 16 cysteine pairs are disulfide-bonded: Cys-1415-Cys-1427, Cys-1417-Cys-1434, Cys-1436-Cys-1445, Cys-1448-Cys-1458, Cys-1461-Cys-1469, Cys-1463-Cys-1476, Cys-1478-Cys-1487, Cys-1490-Cys-1503, Cys-1506-Cys-1520, Cys-1508-Cys-1527, Cys-1529-Cys-1538, Cys-1541-Cys-1551, Cys-1554-Cys-1566, Cys-1556-Cys-1573, Cys-1575-Cys-1584, and Cys-1587-Cys-1602. Laminin EGF-like domains lie at 1415–1460, 1461–1505, 1506–1553, and 1554–1604; these read CDCV…ECIK, CQCN…GCQK, CGCH…HCYG, and CSCN…GCVN. The Laminin EGF-like 16; first part domain maps to 1605–1614; that stretch reads CFCFGVTDSC. The Laminin IV type A domain occupies 1615–1796; it reads RSSMYPVTIM…SVIKASSVEQ (182 aa). N-linked (GlcNAc...) asparagine glycosylation is found at Asn-1705 and Asn-1756. The Laminin EGF-like 16; second part domain maps to 1797–1829; sequence CQCPAPYTGPSCQLCASGYHRVQSGSFLGACVP. Intrachain disulfides connect Cys-1830–Cys-1839, Cys-1832–Cys-1846, Cys-1849–Cys-1858, Cys-1861–Cys-1877, Cys-1880–Cys-1894, Cys-1882–Cys-1905, Cys-1907–Cys-1916, Cys-1919–Cys-1934, Cys-1937–Cys-1951, Cys-1939–Cys-1958, Cys-1961–Cys-1970, Cys-1973–Cys-1987, Cys-1990–Cys-2000, Cys-1992–Cys-2007, Cys-2009–Cys-2018, Cys-2021–Cys-2031, Cys-2037–Cys-2048, Cys-2039–Cys-2055, Cys-2057–Cys-2066, Cys-2069–Cys-2081, Cys-2084–Cys-2096, Cys-2086–Cys-2103, Cys-2105–Cys-2114, and Cys-2117–Cys-2129. Laminin EGF-like domains are found at residues 1830 to 1879, 1880 to 1936, 1937 to 1989, 1990 to 2036, 2037 to 2083, and 2084 to 2131; these read CECN…DCMA, CACP…SCSP, CQCN…NCSS, CECS…GCQG, CHCG…GCDK, and CDCE…GCRR. Asn-1868 carries an N-linked (GlcNAc...) asparagine glycan. Asn-1944 carries N-linked (GlcNAc...) asparagine glycosylation. The N-linked (GlcNAc...) asparagine glycan is linked to Asn-1986. N-linked (GlcNAc...) asparagine glycosylation is present at Asn-2002. N-linked (GlcNAc...) asparagine glycosylation is found at Asn-2159, Asn-2207, Asn-2231, Asn-2235, Asn-2401, Asn-2421, Asn-2487, and Asn-2821. Laminin G-like domains lie at 2693 to 2884, 2896 to 3066, and 3072 to 3235; these read GAHF…VNGA, ELVV…RSGC, and RTVS…LNGC. A disulfide bridge links Cys-3040 with Cys-3066. Asn-3087 carries N-linked (GlcNAc...) asparagine glycosylation. Cys-3209 and Cys-3235 are oxidised to a cystine. Residues 3236–3294 form a disordered region; the sequence is SLSDDENISTTTTAAPKPTDDSDVAVLPIDEEEESTTTTTTTTTEEPTEEPAEARPDGH. The N-linked (GlcNAc...) asparagine glycan is linked to Asn-3242. Positions 3271–3280 are enriched in low complexity; the sequence is TTTTTTTTTE. Laminin G-like domains lie at 3310–3482 and 3488–3669; these read GFNF…TEQC and PGMY…RNAC. The cysteines at positions 3460 and 3482 are disulfide-linked. N-linked (GlcNAc...) asparagine glycosylation is present at Asn-3541. Cysteines 3633 and 3669 form a disulfide.

As to quaternary structure, laminin is a complex glycoprotein, consisting of three different polypeptide chains (alpha, beta, gamma), which are bound to each other by disulfide bonds into a cross-shaped molecule comprising one long and three short arms with globules at each end.

It is found in the secreted. The protein localises to the extracellular space. It localises to the extracellular matrix. Its subcellular location is the basement membrane. Functionally, binding to cells via a high affinity receptor, laminin is thought to mediate the attachment, migration and organization of cells into tissues during embryonic development by interacting with other extracellular matrix components. Required to assemble a stable basement membrane and for organizing receptor complexes and cytoskeletal components to the proper cell surfaces. During embryogenesis, does not require the presence of collagen type IV in order to associate with cell surfaces, prior to assembly of the prototypical basement membrane. During the formation of neuromuscular junctions at the larval stage, negatively regulates membrane protrusion from body wall muscles, probably downstream of the integrin complex formed by pat-2 and pat-3. Probably plays a distinct role from the related laminin subunit alpha lam-3. The sequence is that of Laminin-like protein epi-1 (epi-1) from Caenorhabditis elegans.